The primary structure comprises 328 residues: MTEMYDITIIGGGPAGLFAGFYAGMRTAKTQIIESLPQAGGQVAALYPEKMIYDVGGYAGIKAANLAKELEKQTRLVGTEIRLNETVVDIQAQADFYHVKTNRNEYDTRAILLATGNGAFNPRKLAVEGLDHLEDKKIYYHMPDVEHFENQDILVAGGGDSAIDIALMLEPIAKSISLVHRRQQFRGMERNVQHLQESTVKVMTPYLINGVREAVEGIDVDLKEIGTEALKATHFDKLIVNYGFTSSNKIIKGWEIDLTQEHRMFAVDSLMHTNMKNIYAIGDGVEYPGKLRLIATAFGEGPIAVNQIMNDLYPGKRGPVHSTSMFEK.

The FAD site is built by Glu-34, Gln-42, Tyr-47, Val-87, Phe-120, Asp-283, and Thr-323.

This sequence belongs to the ferredoxin--NADP reductase type 2 family. In terms of assembly, homodimer. The cofactor is FAD.

It carries out the reaction 2 reduced [2Fe-2S]-[ferredoxin] + NADP(+) + H(+) = 2 oxidized [2Fe-2S]-[ferredoxin] + NADPH. The chain is Ferredoxin--NADP reductase from Pediococcus pentosaceus (strain ATCC 25745 / CCUG 21536 / LMG 10740 / 183-1w).